A 369-amino-acid chain; its full sequence is MEFEVKKTSGKARVGVLKLPHGVVRTPVFMPVGTNANVKLLTPRDLEEAGAEIVLSNTFHLMLKPGVEIIRLHGGLHKFMGWKKPILTDSGGFQVFSLPKLKIDDEGVTFKSPIDGSKVFLSPEISMEVQIALGSDICMAFDHCPPPDADYEVVKEATERTYRWALRSKEAFKTENQVLFGIVQGGVYPDLRKKSALQITSIGFDGYAIGGLSIGEERSLTLEMTEITVEYLPEDRPRYFMGGGSPELILELVDRGVDMFDSVFPTRIARHGTALTWKGRLNLKASYNKRSLDPVDEQCGCYTCKNFTRSYIHHLIDRGEVLGQILLSLHNVSFMISFMDEVRRSIEEGTFREFKGKMIDVYSSGGVSV.

The active-site Proton acceptor is Asp-89. Residues 89-93 (DSGGF), Asp-142, Gln-184, and Gly-211 each bind substrate. The segment at 242–248 (GGGSPEL) is RNA binding. Catalysis depends on Asp-261, which acts as the Nucleophile. The tract at residues 266-270 (TRIAR) is RNA binding; important for wobble base 34 recognition. Zn(2+) is bound by residues Cys-299, Cys-301, Cys-304, and His-330.

This sequence belongs to the queuine tRNA-ribosyltransferase family. In terms of assembly, homodimer. Within each dimer, one monomer is responsible for RNA recognition and catalysis, while the other monomer binds to the replacement base PreQ1. Zn(2+) is required as a cofactor.

The catalysed reaction is 7-aminomethyl-7-carbaguanine + guanosine(34) in tRNA = 7-aminomethyl-7-carbaguanosine(34) in tRNA + guanine. It participates in tRNA modification; tRNA-queuosine biosynthesis. Catalyzes the base-exchange of a guanine (G) residue with the queuine precursor 7-aminomethyl-7-deazaguanine (PreQ1) at position 34 (anticodon wobble position) in tRNAs with GU(N) anticodons (tRNA-Asp, -Asn, -His and -Tyr). Catalysis occurs through a double-displacement mechanism. The nucleophile active site attacks the C1' of nucleotide 34 to detach the guanine base from the RNA, forming a covalent enzyme-RNA intermediate. The proton acceptor active site deprotonates the incoming PreQ1, allowing a nucleophilic attack on the C1' of the ribose to form the product. After dissociation, two additional enzymatic reactions on the tRNA convert PreQ1 to queuine (Q), resulting in the hypermodified nucleoside queuosine (7-(((4,5-cis-dihydroxy-2-cyclopenten-1-yl)amino)methyl)-7-deazaguanosine). The protein is Queuine tRNA-ribosyltransferase of Thermotoga neapolitana (strain ATCC 49049 / DSM 4359 / NBRC 107923 / NS-E).